Consider the following 1198-residue polypeptide: Structural polyprotein (1198 aa).

Residues 2–15 (TKKPGGPGKNRAIN) are interaction with host EXOC1. At 2 to 109 (TKKPGGPGKN…RKQNKRGGNE (108 aa)) the chain is on the cytoplasmic side. The interval 37–72 (LLDGRGPVRFVLALITFFKFTALAPTKALLGRWKAV) is hydrophobic; homodimerization of capsid protein C. Positions 106–127 (GGNEGSIMWLASLAVVIAYAGA) are cleaved as a propeptide — ER anchor for the capsid protein C, removed in mature form by serine protease NS3. Residues 110–130 (GSIMWLASLAVVIAYAGAMKL) traverse the membrane as a helical segment. Residues 131 to 253 (SNFQGKLLMT…ATRYLMKTEN (123 aa)) are Extracellular-facing. The N-linked (GlcNAc...) asparagine; by host glycan is linked to Asn-142. A helical membrane pass occupies residues 254-274 (WIIRNPGYAFLAATLGWMLGS). At 275–279 (NNGQR) the chain is on the cytoplasmic side. A helical membrane pass occupies residues 280 to 294 (VVFTILLLLVAPAYS). Topologically, residues 295-746 (FNCLGMGNRD…QVFGGAFRTL (452 aa)) are extracellular. 6 disulfides stabilise this stretch: Cys-297/Cys-324, Cys-354/Cys-410, Cys-354/Cys-415, Cys-368/Cys-399, Cys-386/Cys-410, and Cys-386/Cys-415. The tract at residues 392-405 (DRGWGNGCGLFGKG) is fusion peptide. A glycan (N-linked (GlcNAc...) asparagine; by host) is linked at Asn-448. Intrachain disulfides connect Cys-484–Cys-581 and Cys-598–Cys-629. The helical transmembrane segment at 747 to 767 (FGGMSWITQGLMGALLLWMGV) threads the bilayer. Topologically, residues 768 to 773 (NARDRS) are cytoplasmic. The helical transmembrane segment at 774 to 794 (IALAFLATGGVLVFLATNVHA) threads the bilayer. At 795-1198 (DTGCAIDITR…CADAWGHHLH (404 aa)) the chain is on the extracellular side. Cystine bridges form between Cys-798/Cys-809, Cys-849/Cys-937, Cys-973/Cys-1017, Cys-1074/Cys-1123, Cys-1085/Cys-1106, and Cys-1107/Cys-1110. N-linked (GlcNAc...) asparagine; by host glycans are attached at residues Asn-924 and Asn-1001. Residues 1152 to 1177 (VDPFSAGPSGDVSGHPGGPSQEVDGQ) are disordered.

Homodimer. Interacts (via N-terminus) with host EXOC1 (via C-terminus); this interaction results in EXOC1 degradation through the proteasome degradation pathway. Interacts with host CAPRIN1; this interaction is involved in the suppression of the integrated stress response. In terms of assembly, forms heterodimers with envelope protein E in the endoplasmic reticulum and Golgi. As to quaternary structure, homodimer; in the endoplasmic reticulum and Golgi. Interacts with protein prM. Interacts with non-structural protein 1. Post-translationally, genome polyprotein: Specific enzymatic cleavages in vivo yield mature proteins. Cleavages in the lumen of endoplasmic reticulum are performed by host signal peptidase, whereas cleavages in the cytoplasmic side are performed by serine protease NS3. Signal cleavage at the 2K-4B site requires a prior NS3 protease-mediated cleavage at the 4A-2K site. In terms of processing, cleaved in post-Golgi vesicles by a host furin, releasing the mature small envelope protein M, and peptide pr. This cleavage is incomplete as up to 30% of viral particles still carry uncleaved prM. N-glycosylated.

It localises to the secreted. The protein resides in the virion membrane. It is found in the host endoplasmic reticulum membrane. Functionally, plays a role in virus budding by binding to the cell membrane and gathering the viral RNA into a nucleocapsid that forms the core of a mature virus particle. During virus entry, may induce genome penetration into the host cytoplasm after hemifusion induced by the surface proteins. Can migrate to the cell nucleus where it modulates host functions. Overcomes the anti-viral effects of host EXOC1 by sequestering and degrading the latter through the proteasome degradation pathway. Inhibits the integrated stress response (ISR) in the infected cell by binding to host CAPRIN1. Inhibits RNA silencing by interfering with host Dicer. Its function is as follows. Prevents premature fusion activity of envelope proteins in trans-Golgi by binding to envelope protein E at pH6.0. After virion release in extracellular space, gets dissociated from E dimers. In terms of biological role, acts as a chaperone for envelope protein E during intracellular virion assembly by masking and inactivating envelope protein E fusion peptide. prM is the only viral peptide matured by host furin in the trans-Golgi network probably to avoid catastrophic activation of the viral fusion activity in acidic Golgi compartment prior to virion release. prM-E cleavage is inefficient, and many virions are only partially matured. These uncleaved prM would play a role in immune evasion. Functionally, may play a role in virus budding. Exerts cytotoxic effects by activating a mitochondrial apoptotic pathway through M ectodomain. May display a viroporin activity. Binds to host cell surface receptor and mediates fusion between viral and cellular membranes. Envelope protein is synthesized in the endoplasmic reticulum in the form of heterodimer with protein prM. They play a role in virion budding in the ER, and the newly formed immature particle is covered with 60 spikes composed of heterodimer between precursor prM and envelope protein E. The virion is transported to the Golgi apparatus where the low pH causes dissociation of PrM-E heterodimers and formation of E homodimers. prM-E cleavage is inefficient, and many virions are only partially matured. These uncleaved prM would play a role in immune evasion. Its function is as follows. May play a role in neuroinvasiveness. This is Structural polyprotein from Japanese encephalitis virus (strain Jaoars982) (JEV).